The chain runs to 246 residues: Adenosylcobinamide-GDP ribazoletransferase (246 aa).

A run of 6 helical transmembrane segments spans residues 34 to 54 (IVTF…VALL), 59 to 79 (CGVP…TGGF), 113 to 133 (GGLA…ELLL), 136 to 156 (IHPI…AALL), 181 to 201 (TLVT…LQGL), and 203 to 223 (AALI…RTLG).

Belongs to the CobS family. It depends on Mg(2+) as a cofactor.

The protein localises to the cell inner membrane. The catalysed reaction is alpha-ribazole + adenosylcob(III)inamide-GDP = adenosylcob(III)alamin + GMP + H(+). It carries out the reaction alpha-ribazole 5'-phosphate + adenosylcob(III)inamide-GDP = adenosylcob(III)alamin 5'-phosphate + GMP + H(+). It participates in cofactor biosynthesis; adenosylcobalamin biosynthesis; adenosylcobalamin from cob(II)yrinate a,c-diamide: step 7/7. Joins adenosylcobinamide-GDP and alpha-ribazole to generate adenosylcobalamin (Ado-cobalamin). Also synthesizes adenosylcobalamin 5'-phosphate from adenosylcobinamide-GDP and alpha-ribazole 5'-phosphate. In Klebsiella pneumoniae subsp. pneumoniae (strain ATCC 700721 / MGH 78578), this protein is Adenosylcobinamide-GDP ribazoletransferase.